Consider the following 267-residue polypeptide: AMP/ADP-polyphosphate phosphotransferase (267 aa).

This sequence belongs to the polyphosphate kinase 2 (PPK2) family. Class III subfamily. It depends on Mn(2+) as a cofactor.

It carries out the reaction [phosphate](n) + ADP = [phosphate](n+1) + AMP. It catalyses the reaction [phosphate](n) + ATP = [phosphate](n+1) + ADP. Its function is as follows. Uses inorganic polyphosphate (polyP) as a donor to convert both AMP to ADP and ADP to ATP. Can also use GMP, CMP, UMP, GDP, CDP and UDP. This is AMP/ADP-polyphosphate phosphotransferase from Meiothermus ruber (strain ATCC 35948 / DSM 1279 / VKM B-1258 / 21) (Thermus ruber).